Here is a 234-residue protein sequence, read N- to C-terminus: Orotidine 5'-phosphate decarboxylase (234 aa).

Residues D11, K33, 60–69 (DLKFHDIPNT), T120, R181, Q190, G210, and R211 contribute to the substrate site. K62 acts as the Proton donor in catalysis.

Belongs to the OMP decarboxylase family. Type 1 subfamily. In terms of assembly, homodimer.

It carries out the reaction orotidine 5'-phosphate + H(+) = UMP + CO2. It functions in the pathway pyrimidine metabolism; UMP biosynthesis via de novo pathway; UMP from orotate: step 2/2. Functionally, catalyzes the decarboxylation of orotidine 5'-monophosphate (OMP) to uridine 5'-monophosphate (UMP). The protein is Orotidine 5'-phosphate decarboxylase of Aliivibrio fischeri (strain ATCC 700601 / ES114) (Vibrio fischeri).